A 330-amino-acid chain; its full sequence is Methionyl-tRNA formyltransferase (330 aa).

Residue 112-115 coordinates (6S)-5,6,7,8-tetrahydrofolate; it reads SLLP.

This sequence belongs to the Fmt family.

The enzyme catalyses L-methionyl-tRNA(fMet) + (6R)-10-formyltetrahydrofolate = N-formyl-L-methionyl-tRNA(fMet) + (6S)-5,6,7,8-tetrahydrofolate + H(+). Attaches a formyl group to the free amino group of methionyl-tRNA(fMet). The formyl group appears to play a dual role in the initiator identity of N-formylmethionyl-tRNA by promoting its recognition by IF2 and preventing the misappropriation of this tRNA by the elongation apparatus. The chain is Methionyl-tRNA formyltransferase from Alcanivorax borkumensis (strain ATCC 700651 / DSM 11573 / NCIMB 13689 / SK2).